A 1346-amino-acid chain; its full sequence is DNA-directed RNA polymerase subunit beta (1346 aa).

It belongs to the RNA polymerase beta chain family. As to quaternary structure, the RNAP catalytic core consists of 2 alpha, 1 beta, 1 beta' and 1 omega subunit. When a sigma factor is associated with the core the holoenzyme is formed, which can initiate transcription.

It catalyses the reaction RNA(n) + a ribonucleoside 5'-triphosphate = RNA(n+1) + diphosphate. In terms of biological role, DNA-dependent RNA polymerase catalyzes the transcription of DNA into RNA using the four ribonucleoside triphosphates as substrates. This Psychromonas ingrahamii (strain DSM 17664 / CCUG 51855 / 37) protein is DNA-directed RNA polymerase subunit beta.